Reading from the N-terminus, the 91-residue chain is Small ribosomal subunit protein bS16 (91 aa).

This sequence belongs to the bacterial ribosomal protein bS16 family.

The chain is Small ribosomal subunit protein bS16 from Ruthia magnifica subsp. Calyptogena magnifica.